The following is a 197-amino-acid chain: Protein Hikeshi (197 aa).

Positions 18–55 are required for F-X-F-G repeats-nucleoporins recognition and nuclear import; it reads VAEDKFVFDLPDYESINHVVVFMLGTIPFPEGMGGSVY. Positions 124 to 134 are flexible linker region involved in nuclear import of HSP70 proteins; that stretch reads QTPVGNAAVSS.

Belongs to the OPI10 family. Forms an asymmetric homodimer; required for binding and nuclear import of HSP70 proteins. Interacts with ATP-bound HSP70 proteins. Interacts with NUP62 and NUP153 (via F-X-F-G repeats). Interacts with HSPA8.

The protein resides in the cytoplasm. Its subcellular location is the cytosol. It localises to the nucleus. Functionally, acts as a specific nuclear import carrier for HSP70 proteins following heat-shock stress: acts by mediating the nucleoporin-dependent translocation of ATP-bound HSP70 proteins into the nucleus. HSP70 proteins import is required to protect cells from heat shock damages. Does not translocate ADP-bound HSP70 proteins into the nucleus. This Homo sapiens (Human) protein is Protein Hikeshi.